Consider the following 234-residue polypeptide: NAD-dependent protein deacetylase (234 aa).

One can recognise a Deacetylase sirtuin-type domain in the interval 1 to 234 (MSDITAAQTT…AVDFFEGVQV (234 aa)). NAD(+)-binding residues include A23, T27, R35, Q99, I101, D102, H117, T184, S185, N208, and V226. Nicotinamide contacts are provided by I101 and D102. Residue H117 is the Proton acceptor of the active site.

This sequence belongs to the sirtuin family. Class U subfamily.

The protein localises to the cytoplasm. The enzyme catalyses N(6)-acetyl-L-lysyl-[protein] + NAD(+) + H2O = 2''-O-acetyl-ADP-D-ribose + nicotinamide + L-lysyl-[protein]. Its function is as follows. NAD-dependent protein deacetylase which modulates the activities of several enzymes which are inactive in their acetylated form. This is NAD-dependent protein deacetylase from Lactiplantibacillus plantarum (strain ATCC BAA-793 / NCIMB 8826 / WCFS1) (Lactobacillus plantarum).